The following is a 267-amino-acid chain: Hydroxyethylthiazole kinase 2 (267 aa).

Position 41 (M41) interacts with substrate. The ATP site is built by K116 and T166. Residue G193 coordinates substrate.

The protein belongs to the Thz kinase family. It depends on Mg(2+) as a cofactor.

It catalyses the reaction 5-(2-hydroxyethyl)-4-methylthiazole + ATP = 4-methyl-5-(2-phosphooxyethyl)-thiazole + ADP + H(+). The protein operates within cofactor biosynthesis; thiamine diphosphate biosynthesis; 4-methyl-5-(2-phosphoethyl)-thiazole from 5-(2-hydroxyethyl)-4-methylthiazole: step 1/1. Functionally, catalyzes the phosphorylation of the hydroxyl group of 4-methyl-5-beta-hydroxyethylthiazole (THZ). The polypeptide is Hydroxyethylthiazole kinase 2 (Streptococcus pneumoniae serotype 4 (strain ATCC BAA-334 / TIGR4)).